The chain runs to 468 residues: 6-phosphogluconate dehydrogenase, decarboxylating (468 aa).

NADP(+) contacts are provided by residues 10–15 (GMAVMG), 33–35 (NRS), 74–76 (VKA), and Asn-102. Substrate-binding positions include Asn-102 and 128–130 (SGG). Lys-183 serves as the catalytic Proton acceptor. 186 to 187 (HN) is a substrate binding site. Glu-190 serves as the catalytic Proton donor. Tyr-191, Lys-260, Arg-287, Arg-445, and His-451 together coordinate substrate.

It belongs to the 6-phosphogluconate dehydrogenase family. As to quaternary structure, homodimer.

It catalyses the reaction 6-phospho-D-gluconate + NADP(+) = D-ribulose 5-phosphate + CO2 + NADPH. It functions in the pathway carbohydrate degradation; pentose phosphate pathway; D-ribulose 5-phosphate from D-glucose 6-phosphate (oxidative stage): step 3/3. Functionally, catalyzes the oxidative decarboxylation of 6-phosphogluconate to ribulose 5-phosphate and CO(2), with concomitant reduction of NADP to NADPH. The polypeptide is 6-phosphogluconate dehydrogenase, decarboxylating (gnd) (Salmonella typhimurium (strain LT2 / SGSC1412 / ATCC 700720)).